The following is a 334-amino-acid chain: Anthranilate phosphoribosyltransferase (334 aa).

Residues G79, 82–83, S87, 89–92, 107–115, and S119 contribute to the 5-phospho-alpha-D-ribose 1-diphosphate site; these read GD, NIST, and KHGNRSISS. G79 contributes to the anthranilate binding site. S91 contacts Mg(2+). N110 provides a ligand contact to anthranilate. Position 165 (R165) interacts with anthranilate. Mg(2+) is bound by residues D224 and E225.

This sequence belongs to the anthranilate phosphoribosyltransferase family. Homodimer. Mg(2+) serves as cofactor.

The catalysed reaction is N-(5-phospho-beta-D-ribosyl)anthranilate + diphosphate = 5-phospho-alpha-D-ribose 1-diphosphate + anthranilate. The protein operates within amino-acid biosynthesis; L-tryptophan biosynthesis; L-tryptophan from chorismate: step 2/5. Functionally, catalyzes the transfer of the phosphoribosyl group of 5-phosphorylribose-1-pyrophosphate (PRPP) to anthranilate to yield N-(5'-phosphoribosyl)-anthranilate (PRA). The chain is Anthranilate phosphoribosyltransferase from Streptococcus pneumoniae (strain 70585).